We begin with the raw amino-acid sequence, 430 residues long: Asparagine--tRNA ligase (430 aa).

It belongs to the class-II aminoacyl-tRNA synthetase family. In terms of assembly, homodimer.

It localises to the cytoplasm. The catalysed reaction is tRNA(Asn) + L-asparagine + ATP = L-asparaginyl-tRNA(Asn) + AMP + diphosphate + H(+). The sequence is that of Asparagine--tRNA ligase from Bacillus velezensis (strain DSM 23117 / BGSC 10A6 / LMG 26770 / FZB42) (Bacillus amyloliquefaciens subsp. plantarum).